The following is a 93-amino-acid chain: Putative regulatory protein LA_2599 (93 aa).

Belongs to the RemA family.

This chain is Putative regulatory protein LA_2599, found in Leptospira interrogans serogroup Icterohaemorrhagiae serovar Lai (strain 56601).